A 175-amino-acid chain; its full sequence is Adenylyl-sulfate kinase (175 aa).

12-19 (GLSGAGKT) serves as a coordination point for ATP. Ser-86 serves as the catalytic Phosphoserine intermediate.

The protein belongs to the APS kinase family.

It catalyses the reaction adenosine 5'-phosphosulfate + ATP = 3'-phosphoadenylyl sulfate + ADP + H(+). It functions in the pathway sulfur metabolism; hydrogen sulfide biosynthesis; sulfite from sulfate: step 2/3. Functionally, catalyzes the synthesis of activated sulfate. This is Adenylyl-sulfate kinase from Synechococcus sp. (strain JA-2-3B'a(2-13)) (Cyanobacteria bacterium Yellowstone B-Prime).